Reading from the N-terminus, the 286-residue chain is Mating type protein A-1 (286 aa).

Residues 40–95 constitute a DNA-binding region (alpha box); that stretch reads AAKKKVNGFMSFRSYYSPLFSQLPQKERSPFMTILWQHDPFHNEWNFMCSVYSSIR.

The protein belongs to the MATALPHA1 family.

It is found in the nucleus. In terms of biological role, required for expression of the heterokaryon incompatibility and sexual functions. This is Mating type protein A-1 (MTA-1) from Neurospora africana.